The chain runs to 449 residues: Chromosomal replication initiator protein DnaA (449 aa).

The domain I, interacts with DnaA modulators stretch occupies residues 1–72 (MPNLEELWAY…VEGVYEFAQL (72 aa)). Residues 72–109 (LEVDPVIMTKDELQPAPATDQRPAVEEDDQNLTFKAKT) form a domain II region. The interval 110–326 (HLNPKYTFDR…GALVRVQAFS (217 aa)) is domain III, AAA+ region. ATP is bound by residues glycine 154, glycine 156, lysine 157, and threonine 158. The interval 327–449 (TMKNEDITTS…ELRNILKNRG (123 aa)) is domain IV, binds dsDNA.

Belongs to the DnaA family. In terms of assembly, oligomerizes as a right-handed, spiral filament on DNA at oriC.

It localises to the cytoplasm. Plays an essential role in the initiation and regulation of chromosomal replication. ATP-DnaA binds to the origin of replication (oriC) to initiate formation of the DNA replication initiation complex once per cell cycle. Binds the DnaA box (a 9 base pair repeat at the origin) and separates the double-stranded (ds)DNA. Forms a right-handed helical filament on oriC DNA; dsDNA binds to the exterior of the filament while single-stranded (ss)DNA is stabiized in the filament's interior. The ATP-DnaA-oriC complex binds and stabilizes one strand of the AT-rich DNA unwinding element (DUE), permitting loading of DNA polymerase. After initiation quickly degrades to an ADP-DnaA complex that is not apt for DNA replication. Binds acidic phospholipids. This chain is Chromosomal replication initiator protein DnaA, found in Lacticaseibacillus casei (strain BL23) (Lactobacillus casei).